Here is a 792-residue protein sequence, read N- to C-terminus: Phosphoenolpyruvate synthase (792 aa).

Histidine 421 functions as the Tele-phosphohistidine intermediate in the catalytic mechanism. 7 residues coordinate substrate: arginine 511, arginine 578, glutamate 680, glycine 701, serine 702, asparagine 703, and aspartate 704. Glutamate 680 is a binding site for Mg(2+). Aspartate 704 is a binding site for Mg(2+). Cysteine 751 functions as the Proton donor in the catalytic mechanism.

It belongs to the PEP-utilizing enzyme family. In terms of assembly, homodimer. Mg(2+) serves as cofactor.

The catalysed reaction is pyruvate + ATP + H2O = phosphoenolpyruvate + AMP + phosphate + 2 H(+). It participates in carbohydrate biosynthesis; gluconeogenesis. Activated by a Pi-dependent pyrophosphorylation and inactivated by an ADP-dependent phosphorylation on a regulatory threonine. Both reactions are mediated by the bifunctional serine/threonine kinase and phosphorylase PpsR. Its function is as follows. Catalyzes the phosphorylation of pyruvate to phosphoenolpyruvate. The polypeptide is Phosphoenolpyruvate synthase (ppsA) (Escherichia coli (strain K12)).